The chain runs to 1533 residues: MPVKRLREVVSQNHGDHLVLLKDELPCVPPALSANKRLPVGTGTSLNGTSRGSSDLTSARNCYQPLLENPMVSESDFSKDVAVQVLPLDKIEENNKQKANDIFISQYTMGQKDALRTVLKQKAQSMPVFKEVKVHLLEDAGIEKDAVTQETRISPSGIDSATTVAAATAAAIATAAPLIKVQSDLEAKVNSVTELLSKLQETDKHLQRVTEQQTSIQRKQEKLHCHDHEKQMNVFMEQHIRHLEKLQQQQIDIQTHFISAALKTSSFQPVSMPSSRAVEKYSVKPEHPNLGSCNPSLYNTFASKQAPLKEVEDTSFDKQKSPLETPAPRRFAPVPVSRDDELSKRENLLEEKENMEVSCHRGNVRLLEQILNNNDSLTRKSESSNTTSLTRSKIGWTPEKTNRFPSCEELETTKVTMQKSDDVLHDLGQKEKETNSMVQPKESLSMLKLPDLPQNSVKLQTTNTTRSVLKDAEKILRGVQNNKKVLEENLEAIIRAKDGAAMYSLINALSTNREMSEKIRIRKTVDEWIKTISAEIQDELSRTDYEQKRFDQKNQRTKKGQNMTKDIRTNTQDKTVNKSVIPRKHSQKQIEEHFRNLPMRGMPASSLQKERKEGLLKATTVIQDEDYMLQVYGKPVYQGHRSTLKKGPYLRFNSPSPKSRPQRPKVIERVKGTKVKSIRTQTDFYATKPKKMDSKMKHSVPVLPHGDQQYLFSPSREMPTFSGTLEGHLIPMAILLGQTQSNSDTMPPAGVIVSKPHPVTVTTSIPPSSRKVETGVKKPNIAIVEMKSEKKDPPQLTVQVLPSVDIDSISNSSADVLSPLSSPKEASLPPVQTWIKTPEIMKVDEEEVKFPGTNFDEIIDVIQEEEKCDEIPDSEPILEFNRSVKADSTKYNGPPFPPVASTFQPTADILDKVIERKETLENSLIQWVEQEIMSRIISGLFPVQQQIAPSISVSVSETSEPLTSDIVEGTSSGALQLFVDAGVPVNSNVIKHFVNEALAETIAVMLGDREAKKQGPVATGVSGDASTNETYLPARVCTPLPTPQPTPPCSPSSPAKECVLVKTPDSSPCDSDHDMAFPVKEICAEKGDDMPAIMLVNTPTVTPTTTPPPAAAVFTPTLSDISIDKLKVSSPELPKPWGDGDLPLEEENPNSPQEELHPRAIVMSVAKDEEPESMDFPAQPPPPEPVPFMPFPAGTKAPSPSQMPGSDSSTLESTLSVTVTETETLDKPISEGEILFSCGQKLAPKILEDIGLYLTNLNDSLSSTLHDAVEMEDDPPSEGQVIRMSHKKFHADAILSFAKQNQESAVSQQAVYHSEDLENSVGELSEGQRPQLTAAAENILMGHSLYMQPPVTNTQSLDQQCDPKPLSRQFDTVSGSIYEDSCASHGPMSLGELELEPNSKLVLPTTLLTAQENDVNLPVAAEDFSQYQLKQNQDVKQVEHKPSQSYLRVRNKSDIAPSQQQVSPGDMDRTQIELNPYLTCVFSGGKAVPLSASQMPPAKMSVMLPSVNLEDCSQSLSLSTMQEDMESSGADTF.

Residues 32 to 57 (LSANKRLPVGTGTSLNGTSRGSSDLT) form a disordered region. A compositionally biased stretch (polar residues) spans 42–57 (TGTSLNGTSRGSSDLT). Residues 182-223 (QSDLEAKVNSVTELLSKLQETDKHLQRVTEQQTSIQRKQEKL) are a coiled coil. A compositionally biased stretch (basic and acidic residues) spans 309–321 (KEVEDTSFDKQKS). Disordered regions lie at residues 309 to 339 (KEVE…VSRD) and 377 to 400 (LTRK…TPEK). Ser-406 is modified (phosphoserine). Positions 467 to 501 (SVLKDAEKILRGVQNNKKVLEENLEAIIRAKDGAA) form a coiled coil. The interval 467-554 (SVLKDAEKIL…YEQKRFDQKN (88 aa)) is required for centrosomal localization. Positions 546 to 575 (EQKRFDQKNQRTKKGQNMTKDIRTNTQDKT) are disordered. Polar residues predominate over residues 560 to 575 (GQNMTKDIRTNTQDKT). A phosphothreonine mark is found at Thr-1042 and Thr-1046. Position 1050 is a phosphoserine (Ser-1050). Thr-1063 is modified (phosphothreonine). Ser-1066 is modified (phosphoserine). Residues 1129–1156 (SSPELPKPWGDGDLPLEEENPNSPQEEL) are disordered.

Belongs to the TALPID3 family. Interacts with CCP110, CEP290, CEP97, KIF24. In terms of tissue distribution, ubiquitously expressed. Expressed in photoreceptor cells (at protein level).

It localises to the cytoplasm. The protein resides in the cytoskeleton. Its subcellular location is the microtubule organizing center. The protein localises to the centrosome. It is found in the photoreceptor inner segment. It localises to the centriole. The protein resides in the cilium basal body. Required for ciliogenesis and sonic hedgehog/SHH signaling. Required for the centrosomal recruitment of RAB8A and for the targeting of centriole satellite proteins to centrosomes such as of PCM1. May play a role in early ciliogenesis in the disappearance of centriolar satellites that preceeds ciliary vesicle formation. Involved in regulation of cell intracellular organization. Involved in regulation of cell polarity. Required for asymmetrical localization of CEP120 to daughter centrioles. This chain is Protein TALPID3 (KIAA0586), found in Homo sapiens (Human).